A 163-amino-acid polypeptide reads, in one-letter code: Nucleotide-binding protein YajQ (163 aa).

Belongs to the YajQ family.

In terms of biological role, nucleotide-binding protein. The sequence is that of Nucleotide-binding protein YajQ from Shigella dysenteriae serotype 1 (strain Sd197).